The chain runs to 437 residues: GTPase Der (437 aa).

EngA-type G domains follow at residues 3–167 (NIVA…TKKV) and 176–352 (PAIA…DIRQ). GTP contacts are provided by residues 9–16 (GRPNVGKS), 56–60 (DTGGW), 119–122 (NKAD), 182–189 (GKPNVGKS), 229–233 (DTAGI), and 294–297 (NKWD). Residues 353–437 (IKIPTSQLNR…TPINIFMREK (85 aa)) form the KH-like domain.

It belongs to the TRAFAC class TrmE-Era-EngA-EngB-Septin-like GTPase superfamily. EngA (Der) GTPase family. In terms of assembly, associates with the 50S ribosomal subunit.

GTPase that plays an essential role in the late steps of ribosome biogenesis. The chain is GTPase Der from Azobacteroides pseudotrichonymphae genomovar. CFP2.